The sequence spans 661 residues: Bifunctional polymyxin resistance protein ArnA (661 aa).

Residues 1-304 are formyltransferase ArnAFT; that stretch reads MKAVVFAYHD…ALGLVSGAVI (304 aa). The Proton donor; for formyltransferase activity role is filled by His-104. Residues Arg-114 and 136 to 140 contribute to the (6R)-10-formyltetrahydrofolate site; that span reads VNRAD. Positions 314–661 are dehydrogenase ArnADH; that stretch reads RRTRVLILGV…TVELVDDKNP (348 aa). NAD(+) contacts are provided by residues Asp-347 and 368–369; that span reads DI. UDP-alpha-D-glucuronate-binding positions include Ala-393, Tyr-398, and 432-433; that span reads TS. The active-site Proton acceptor; for decarboxylase activity is the Glu-434. UDP-alpha-D-glucuronate-binding positions include Arg-460, Asn-492, 526-535, and Tyr-613; that span reads KLIEGGKQKR. Arg-619 serves as the catalytic Proton donor; for decarboxylase activity.

This sequence in the N-terminal section; belongs to the Fmt family. UDP-L-Ara4N formyltransferase subfamily. The protein in the C-terminal section; belongs to the NAD(P)-dependent epimerase/dehydratase family. UDP-glucuronic acid decarboxylase subfamily. Homohexamer, formed by a dimer of trimers.

The catalysed reaction is UDP-alpha-D-glucuronate + NAD(+) = UDP-beta-L-threo-pentopyranos-4-ulose + CO2 + NADH. It catalyses the reaction UDP-4-amino-4-deoxy-beta-L-arabinose + (6R)-10-formyltetrahydrofolate = UDP-4-deoxy-4-formamido-beta-L-arabinose + (6S)-5,6,7,8-tetrahydrofolate + H(+). Its pathway is nucleotide-sugar biosynthesis; UDP-4-deoxy-4-formamido-beta-L-arabinose biosynthesis; UDP-4-deoxy-4-formamido-beta-L-arabinose from UDP-alpha-D-glucuronate: step 1/3. It participates in nucleotide-sugar biosynthesis; UDP-4-deoxy-4-formamido-beta-L-arabinose biosynthesis; UDP-4-deoxy-4-formamido-beta-L-arabinose from UDP-alpha-D-glucuronate: step 3/3. It functions in the pathway bacterial outer membrane biogenesis; lipopolysaccharide biosynthesis. Bifunctional enzyme that catalyzes the oxidative decarboxylation of UDP-glucuronic acid (UDP-GlcUA) to UDP-4-keto-arabinose (UDP-Ara4O) and the addition of a formyl group to UDP-4-amino-4-deoxy-L-arabinose (UDP-L-Ara4N) to form UDP-L-4-formamido-arabinose (UDP-L-Ara4FN). The modified arabinose is attached to lipid A and is required for resistance to polymyxin and cationic antimicrobial peptides. The polypeptide is Bifunctional polymyxin resistance protein ArnA (Klebsiella pneumoniae subsp. pneumoniae (strain ATCC 700721 / MGH 78578)).